Consider the following 414-residue polypeptide: TAR DNA-binding protein 43 (414 aa).

Glycyl lysine isopeptide (Lys-Gly) (interchain with G-Cter in SUMO2) cross-links involve residues K79, K84, K95, K102, and K181. RRM domains lie at 104–200 and 191–262; these read SDLI…RCTE and RKVF…NAEP. Residue S183 is modified to Phosphoserine. An interaction with UBQLN2 region spans residues 216–414; it reads DVMDVFIPKP…MDSKSSGWGM (199 aa). A compositionally biased stretch (basic and acidic residues) spans 261–274; it reads EPKHNSNRQLERSG. 2 disordered regions span residues 261–303 and 341–373; these read EPKH…GNNQ and ASQQ…GNNS. A Glycyl lysine isopeptide (Lys-Gly) (interchain with G-Cter in SUMO2) cross-link involves residue K263. A compositionally biased stretch (gly residues) spans 275-303; that stretch reads RFGGNPGGFGNQGGFGNSRGGGAGLGNNQ. S292 bears the Phosphoserine mark. R293 is subject to Omega-N-methylarginine. A compositionally biased stretch (low complexity) spans 342-358; sequence SQQNQSGPSGNNQNQGN.

In terms of assembly, monomer and component of the SFPQ-NONO complex, which is probably a heterotetramer of two 52 kDa (NONO) and two 100 kDa (SFPQ) subunits. NONO is a component of spliceosome and U5.4/6 snRNP complexes. Interacts with CPNE4 (via VWFA domain). Forms heterodimers with PSPC1; this involves formation of a coiled coil domain by helices from both proteins. Part of complex consisting of SFPQ, NONO and MATR3. Part of a complex consisting of SFPQ, NONO and NR5A1. Part of a complex consisting of SFPQ, NONO and TOP1. Interacts with SPI1. Interacts with RNF43. Interacts with PER1 and PER2. Part of the HDP-RNP complex composed of at least HEXIM1, PRKDC, XRCC5, XRCC6, paraspeckle proteins (SFPQ, NONO, PSPC1, RBM14, and MATR3) and NEAT1 RNA. Interacts (via second RRM domain) with WASL; the interaction is direct. Component of a multiprotein complex with WASL and SFPQ. Interacts with ERCC6. Interacts (via DNA-binding domain) with TET1. Post-translationally, hyperphosphorylated. Ubiquitinated.

It localises to the nucleus. Its subcellular location is the nucleolus. The protein resides in the nucleus speckle. The protein localises to the chromosome. It is found in the mitochondrion. Its function is as follows. DNA- and RNA binding protein, involved in several nuclear processes. Binds the conventional octamer sequence in double-stranded DNA. Also binds single-stranded DNA and RNA at a site independent of the duplex site. Involved in pre-mRNA splicing, probably as a heterodimer with SFPQ. Interacts with U5 snRNA, probably by binding to a purine-rich sequence located on the 3' side of U5 snRNA stem 1b. Together with PSPC1, required for the formation of nuclear paraspeckles. The SFPQ-NONO heteromer associated with MATR3 may play a role in nuclear retention of defective RNAs. The SFPQ-NONO heteromer may be involved in DNA unwinding by modulating the function of topoisomerase I/TOP1. The SFPQ-NONO heteromer may be involved in DNA non-homologous end joining (NHEJ) required for double-strand break repair and V(D)J recombination and may stabilize paired DNA ends. In vitro, the complex strongly stimulates DNA end joining, binds directly to the DNA substrates and cooperates with the Ku70/G22P1-Ku80/XRCC5 (Ku) dimer to establish a functional preligation complex. NONO is involved in transcriptional regulation. The SFPQ-NONO-NR5A1 complex binds to the CYP17 promoter and regulates basal and cAMP-dependent transcriptional activity. NONO binds to an enhancer element in long terminal repeats of endogenous intracisternal A particles (IAPs) and activates transcription. Regulates the circadian clock by repressing the transcriptional activator activity of the CLOCK-BMAL1 heterodimer. Important for the functional organization of GABAergic synapses. Plays a specific and important role in the regulation of synaptic RNAs and GPHN/gephyrin scaffold structure, through the regulation of GABRA2 transcript. Plays a key role during neuronal differentiation by recruiting TET1 to genomic loci and thereby regulating 5-hydroxymethylcytosine levels. Plays a role in the regulation of DNA virus-mediated innate immune response by assembling into the HDP-RNP complex, a complex that serves as a platform for IRF3 phosphorylation and subsequent innate immune response activation through the cGAS-STING pathway. This is TAR DNA-binding protein 43 (TARDBP) from Pongo abelii (Sumatran orangutan).